A 100-amino-acid polypeptide reads, in one-letter code: MPVRSLSASNSKNAIPLSALRRIWSGELFLKWFCNSTAVMSLGKLPTKTINLLPFLPFLPLPPRPLRVFLFFFTGSSPSFPAALLGLFPSGACSFFTSFS.

The helical transmembrane segment at 68–88 (VFLFFFTGSSPSFPAALLGLF) threads the bilayer.

Its subcellular location is the membrane. This is an uncharacterized protein from Saccharomyces cerevisiae (strain ATCC 204508 / S288c) (Baker's yeast).